Reading from the N-terminus, the 343-residue chain is 3-hydroxy-3-methylglutaryl-CoA lyase, cytoplasmic (343 aa).

Gly-2 is lipidated: N-myristoyl glycine. In terms of domain architecture, Pyruvate carboxyltransferase spans 48–315; it reads VKIVEVGPRD…NTGVDLHKVM (268 aa). Arg-56 serves as a coordination point for substrate. A divalent metal cation is bound by residues Asp-57, His-248, and His-250. The active site involves Cys-281. An a divalent metal cation-binding site is contributed by Asn-290.

Belongs to the HMG-CoA lyase family. It depends on a divalent metal cation as a cofactor. As to expression, present at high level in duodenum and small intestine (at protein level).

The protein resides in the cytoplasm. The protein localises to the cytosol. It localises to the endoplasmic reticulum membrane. It carries out the reaction (3S)-3-hydroxy-3-methylglutaryl-CoA = acetoacetate + acetyl-CoA. Its pathway is metabolic intermediate metabolism; (S)-3-hydroxy-3-methylglutaryl-CoA degradation; acetoacetate from (S)-3-hydroxy-3-methylglutaryl-CoA: step 1/1. Its function is as follows. Non-mitochondrial 3-hydroxy-3-methylglutaryl-CoA lyase that catalyzes a cation-dependent cleavage of (S)-3-hydroxy-3-methylglutaryl-CoA into acetyl-CoA and acetoacetate, a key step in ketogenesis, the products of which support energy production in nonhepatic animal tissues. The protein is 3-hydroxy-3-methylglutaryl-CoA lyase, cytoplasmic (Hmgcll1) of Rattus norvegicus (Rat).